The following is a 174-amino-acid chain: Protein MOTHER of FT and TFL1 homolog 2 (174 aa).

Belongs to the phosphatidylethanolamine-binding protein family.

Its function is as follows. May form complexes with phosphorylated ligands by interfering with kinases and their effectors. The sequence is that of Protein MOTHER of FT and TFL1 homolog 2 from Oryza sativa subsp. japonica (Rice).